We begin with the raw amino-acid sequence, 71 residues long: Gas vesicle protein A (71 aa).

Residues 12–22 form an alpha helix 1 region; that stretch reads LAEVIDRILDK. The interval 23 to 32 is beta-strand 1; sequence GIVIDAWVRV. A beta turn region spans residues 33 to 36; the sequence is SLVG. The tract at residues 37–46 is beta-strand 2; sequence IELLAIEARI. The alpha helix 2 stretch occupies residues 47-70; it reads VIASVETYLKYAEAVGLTQSAAVP.

The protein belongs to the gas vesicle GvpA family. In terms of assembly, the gas vesicle shell is 2 nm thick and consists of a single layer of this protein. It forms helical ribs nearly perpendicular to the long axis of the vesicle.

It is found in the gas vesicle shell. In terms of biological role, gas vesicles (GV) are hollow, gas filled proteinaceous nanostructures found in some microorganisms. During planktonic growth they allow positioning of the organism at a favorable depth for light or nutrient acquisition. GVs are highly permeable to gas. GvpA forms the protein shell. The ratio of GvpA:GvpC is estimated to be 33:1 and more recently 25:1. The protein is Gas vesicle protein A of Dolichospermum flosaquae (Anabaena flos-aquae).